The following is a 542-amino-acid chain: Mitogen-activated protein kinase 14 (542 aa).

The Protein kinase domain occupies 13 to 304 (YKIEEVIGKG…AEEALADPYF (292 aa)). Residues 19-27 (IGKGSYGVV) and lysine 42 each bind ATP. The active-site Proton acceptor is the aspartate 139. Residue threonine 175 is modified to Phosphothreonine. The TXY motif lies at 175 to 177 (TDY). Tyrosine 177 is modified (phosphotyrosine). Disordered regions lie at residues 388–412 (STAA…DNRP) and 482–542 (RNPA…SGHW). Residues 488-507 (PNSSVPLGSSYPRRNQTCKS) are compositionally biased toward polar residues.

It belongs to the protein kinase superfamily. CMGC Ser/Thr protein kinase family. MAP kinase subfamily. Dually phosphorylated on Thr-175 and Tyr-177, which activates the enzyme.

It catalyses the reaction L-seryl-[protein] + ATP = O-phospho-L-seryl-[protein] + ADP + H(+). The enzyme catalyses L-threonyl-[protein] + ATP = O-phospho-L-threonyl-[protein] + ADP + H(+). Its activity is regulated as follows. Activated by threonine and tyrosine phosphorylation. In Oryza sativa subsp. japonica (Rice), this protein is Mitogen-activated protein kinase 14 (MPK14).